Reading from the N-terminus, the 621-residue chain is KIF-binding protein (621 aa).

A disordered region spans residues G51–G75. Residues P54–D65 show a composition bias toward acidic residues. At S178 the chain carries Phosphoserine.

The protein belongs to the KIF-binding protein family. Interacts with KIF1B; positively regulates KIF1B microtubule motor activity. Interacts with STMN2. In terms of tissue distribution, highly expressed in heart, brain, ovary, testis, spinal cord and all specific brain regions examined. Moderate expressed at intermediate level in all other adult tissues examined, as well as in fetal liver and brain. Not expressed in blood leukocytes.

Its subcellular location is the cytoplasm. The protein localises to the cytoskeleton. Its function is as follows. Activator of KIF1B plus-end-directed microtubule motor activity. Required for organization of axonal microtubules, and axonal outgrowth and maintenance during peripheral and central nervous system development. The protein is KIF-binding protein of Homo sapiens (Human).